The chain runs to 231 residues: Transmembrane gamma-carboxyglutamic acid protein 3 (231 aa).

Residues 1-19 (MAVFLEAKNAHAVLKRFPR) constitute a propeptide that is removed on maturation. Residues 20-65 (ANEFLEELRQGTIERECMEEICSYEEVKEVFENKEKTMEFWKGYPN) enclose the Gla domain. The Extracellular portion of the chain corresponds to 20–78 (ANEFLEELRQGTIERECMEEICSYEEVKEVFENKEKTMEFWKGYPNAVYSVRDPSQSSD). 13 positions are modified to 4-carboxyglutamate: E22, E25, E26, E33, E35, E38, E39, E44, E45, E48, E51, E54, and E58. Residues C36 and C41 are joined by a disulfide bond. A helical transmembrane segment spans residues 79–101 (AMYVVVPLLGVVLLIVIALFIIW). The Cytoplasmic segment spans residues 102–231 (RCQLQKATRH…IVAASPSADK (130 aa)). Disordered stretches follow at residues 140–165 (HSQG…SRGG) and 184–231 (RLSS…SADK). Polar residues predominate over residues 201–212 (QEGSSEEASVSY).

In terms of processing, gla residues are produced after subsequent post-translational modifications of glutamate by a vitamin K-dependent gamma-carboxylase.

It localises to the membrane. This chain is Transmembrane gamma-carboxyglutamic acid protein 3 (Prrg3), found in Mus musculus (Mouse).